The primary structure comprises 186 residues: Ribosome-recycling factor (186 aa).

This sequence belongs to the RRF family.

The protein localises to the cytoplasm. In terms of biological role, responsible for the release of ribosomes from messenger RNA at the termination of protein biosynthesis. May increase the efficiency of translation by recycling ribosomes from one round of translation to another. This Methylibium petroleiphilum (strain ATCC BAA-1232 / LMG 22953 / PM1) protein is Ribosome-recycling factor.